A 714-amino-acid chain; its full sequence is Fatty acid oxidation complex subunit alpha (714 aa).

The segment at 1-190 (MEMASAFTLN…KLGLVDDVVP (190 aa)) is enoyl-CoA hydratase. The segment at 306 to 714 (APLNSVGILG…FWKTTATDLQ (409 aa)) is 3-hydroxyacyl-CoA dehydrogenase.

This sequence in the N-terminal section; belongs to the enoyl-CoA hydratase/isomerase family. In the central section; belongs to the 3-hydroxyacyl-CoA dehydrogenase family. As to quaternary structure, heterotetramer of two alpha chains (FadJ) and two beta chains (FadI).

The protein localises to the cytoplasm. It carries out the reaction a (3S)-3-hydroxyacyl-CoA = a (2E)-enoyl-CoA + H2O. The enzyme catalyses a 4-saturated-(3S)-3-hydroxyacyl-CoA = a (3E)-enoyl-CoA + H2O. The catalysed reaction is a (3S)-3-hydroxyacyl-CoA + NAD(+) = a 3-oxoacyl-CoA + NADH + H(+). It catalyses the reaction (3S)-3-hydroxybutanoyl-CoA = (3R)-3-hydroxybutanoyl-CoA. The protein operates within lipid metabolism; fatty acid beta-oxidation. Functionally, catalyzes the formation of a hydroxyacyl-CoA by addition of water on enoyl-CoA. Also exhibits 3-hydroxyacyl-CoA epimerase and 3-hydroxyacyl-CoA dehydrogenase activities. The protein is Fatty acid oxidation complex subunit alpha of Shigella boydii serotype 4 (strain Sb227).